Reading from the N-terminus, the 341-residue chain is Anthranilate phosphoribosyltransferase (341 aa).

5-phospho-alpha-D-ribose 1-diphosphate contacts are provided by residues Gly79, 82 to 83, Thr87, 89 to 92, 107 to 115, and Ser119; these read GD, NIST, and KHGNRAASS. Residue Gly79 participates in anthranilate binding. Residue Ser91 coordinates Mg(2+). Asn110 lines the anthranilate pocket. Position 165 (Arg165) interacts with anthranilate. 2 residues coordinate Mg(2+): Asp224 and Glu225.

This sequence belongs to the anthranilate phosphoribosyltransferase family. As to quaternary structure, homodimer. The cofactor is Mg(2+).

The catalysed reaction is N-(5-phospho-beta-D-ribosyl)anthranilate + diphosphate = 5-phospho-alpha-D-ribose 1-diphosphate + anthranilate. The protein operates within amino-acid biosynthesis; L-tryptophan biosynthesis; L-tryptophan from chorismate: step 2/5. Catalyzes the transfer of the phosphoribosyl group of 5-phosphorylribose-1-pyrophosphate (PRPP) to anthranilate to yield N-(5'-phosphoribosyl)-anthranilate (PRA). The polypeptide is Anthranilate phosphoribosyltransferase (Dehalococcoides mccartyi (strain ATCC BAA-2266 / KCTC 15142 / 195) (Dehalococcoides ethenogenes (strain 195))).